The sequence spans 96 residues: Protein Vpr (96 aa).

The homooligomerization stretch occupies residues 1 to 42 (MEQAPEDQGPQREPYNEWTIEILEELKREAVRHFPRPWLHDL). Serine 79, serine 94, and serine 96 each carry phosphoserine; by host.

The protein belongs to the HIV-1 VPR protein family. Homooligomer, may form homodimer. Interacts with p6-gag region of the Pr55 Gag precursor protein through a (Leu-X-X)4 motif near the C-terminus of the P6gag protein. Interacts with host UNG. May interact with host RAD23A/HHR23A. Interacts with host VPRBP/DCAF1, leading to hijack the CUL4A-RBX1-DDB1-DCAF1/VPRBP complex, mediating ubiquitination of host proteins such as TERT and ZGPAT and arrest of the cell cycle in G2 phase. In terms of processing, phosphorylated on several residues by host. These phosphorylations regulate VPR activity for the nuclear import of the HIV-1 pre-integration complex.

It is found in the virion. The protein localises to the host nucleus. Its subcellular location is the host extracellular space. Functionally, during virus replication, may deplete host UNG protein, and incude G2-M cell cycle arrest. Acts by targeting specific host proteins for degradation by the 26S proteasome, through association with the cellular CUL4A-DDB1 E3 ligase complex by direct interaction with host VPRPB/DCAF-1. Cell cycle arrest reportedly occurs within hours of infection and is not blocked by antiviral agents, suggesting that it is initiated by the VPR carried into the virion. Additionally, VPR induces apoptosis in a cell cycle dependent manner suggesting that these two effects are mechanistically linked. Detected in the serum and cerebrospinal fluid of AIDS patient, VPR may also induce cell death to bystander cells. During virus entry, plays a role in the transport of the viral pre-integration (PIC) complex to the host nucleus. This function is crucial for viral infection of non-dividing macrophages. May act directly at the nuclear pore complex, by binding nucleoporins phenylalanine-glycine (FG)-repeat regions. This is Protein Vpr from Human immunodeficiency virus type 1 group M subtype K (isolate 97ZR-EQTB11) (HIV-1).